The primary structure comprises 606 residues: RUN and FYVE domain-containing protein 2 (606 aa).

An RUN domain is found at 37–169 (DSDYPPLQQF…IDANLCVKGE (133 aa)). Residues 210 to 534 (EELNRQLNST…IKEANKALQG (325 aa)) adopt a coiled-coil conformation. Residues 540–598 (DKEATHCKLCEKEFSLSKRKHHCRNCGEIFCNACSDNELPLPSSPKPVRVCDSCHALLI) form an FYVE-type zinc finger. Residues C546, C549, C562, C565, C570, C573, C590, and C593 each coordinate Zn(2+).

Interacts with BMX. Expressed in brain, lung and testis.

It is found in the nucleus. The protein is RUN and FYVE domain-containing protein 2 (RUFY2) of Homo sapiens (Human).